The following is a 138-amino-acid chain: uncharacterized protein (138 aa).

The next 3 membrane-spanning stretches (helical) occupy residues 8–28, 47–67, and 82–102; these read LIIQ…AFLP, FIIC…TIIV, and TLPV…IAFI.

It to U.parvum UU007, UU008 and UU041.

The protein localises to the cell membrane. This is an uncharacterized protein from Ureaplasma parvum serovar 3 (strain ATCC 700970).